Reading from the N-terminus, the 667-residue chain is MVDKIERIKELVEILNKYSYDYYVLDNPSVSDKDYDKKYDELKLLEKETGVVLPYSPTLRIGDIVLDGFNKYTHKGKLWSLDKAQSLDEIKDWHNRNIKFVNDMRAQGEDLPDLKYIATKKFDGLTVNLTYNEEGMLEVSATRGNGEIGENVTAQVKTIKSIPLKLQENHDLFEVHGEAIMTQEAFEKYNSSADSPLKNLRNGAAGALRNLNVKETARRDLSAFFYDVGYKEGYQFKTYLEMMDFIKEKGLPVDDYLKVCVSIEDIKNEIDYIEKIRFDLNYDIDGLVIAIDDIRTRELLGYTVKFPKWAIAYKFEAQEATTKLVDVEWNVGRSGRIGPTAILEPVELAGVTVKRATLNNMDDIKRKGVRIGADVFIRRSNDVIPEIMGTLENTLENSEEIFPPTECPACGSHVVLNGAHYFCENTLSCKPQLVKTIVHYASRDAMNIAGFSEKTAEQLFEKLNIKSISDLYKLKKEDLINLEKFGDKKAENLLNAVEGSKECKLYSFIYALGIPNVGVKTAKDIVNKFKSIDGLKNATFEELVSVQDVGDIVAQDIIEFFKEEKVISTIDELLSLGVNPIFDEVKIVESIFKDKTVVATGTLQNYSRTEIKTKLESLGAKVSGSVSKKTDYVIAGESAGSKLTKAEELGVEVISEEEFEKMLGRES.

Residues 32–36 and 80–81 contribute to the NAD(+) site; these read DKDYD and SL. Residue K121 is the N6-AMP-lysine intermediate of the active site. NAD(+) is bound by residues R143, E178, and K314. Zn(2+)-binding residues include C407, C410, C423, and C429. The BRCT domain maps to 587 to 667; sequence IVESIFKDKT…EFEKMLGRES (81 aa).

Belongs to the NAD-dependent DNA ligase family. LigA subfamily. Mg(2+) is required as a cofactor. It depends on Mn(2+) as a cofactor.

The catalysed reaction is NAD(+) + (deoxyribonucleotide)n-3'-hydroxyl + 5'-phospho-(deoxyribonucleotide)m = (deoxyribonucleotide)n+m + AMP + beta-nicotinamide D-nucleotide.. DNA ligase that catalyzes the formation of phosphodiester linkages between 5'-phosphoryl and 3'-hydroxyl groups in double-stranded DNA using NAD as a coenzyme and as the energy source for the reaction. It is essential for DNA replication and repair of damaged DNA. This chain is DNA ligase, found in Clostridium botulinum (strain Alaska E43 / Type E3).